The following is a 263-amino-acid chain: Leukocyte-associated immunoglobulin-like receptor 1 (263 aa).

Positions 1–21 (MPLHSVIVLVLVLCLGWKSNT) are cleaved as a signal peptide. Residues 27–112 (SDFTICAEPG…VWSQRSNDLQ (86 aa)) enclose the Ig-like C2-type domain. A disulfide bond links Cys-49 and Cys-96. Asn-87 carries an N-linked (GlcNAc...) asparagine glycan. The chain crosses the membrane as a helical span at residues 144-164 (ILTVVSVIFLLCLSLFLFCFL). 2 consecutive short sequence motifs (ITIM motif) follow at residues 225 to 230 (VTYAQL) and 255 to 260 (STYAAI). 2 positions are modified to phosphotyrosine: Tyr-227 and Tyr-257.

Interacts with SH2 domains of tyrosine-protein phosphatases PTPN6 and PTPN11. The interaction with PTPN6 is constitutive. Interacts with the SH2 domain of CSK. Binds with high affinity to extracellular matrix collagens, the interaction is functionally important. Phosphorylation at Tyr-227 and Tyr-257 activates it. May be phosphorylated by LCK. Post-translationally, N-glycosylated. Expressed in lymphoid and non-lymphoid organs.

It is found in the membrane. Its function is as follows. Functions as an inhibitory receptor that plays a constitutive negative regulatory role on cytolytic function of natural killer (NK) cells, B-cells and T-cells. Activation by Tyr phosphorylation results in recruitment and activation of the phosphatases PTPN6 and PTPN11. It also reduces the increase of intracellular calcium evoked by B-cell receptor ligation. May also play its inhibitory role independently of SH2-containing phosphatases. Modulates cytokine production in CD4+ T-cells, down-regulating IL2 and IFNG production while inducing secretion of transforming growth factor beta. Also down-regulates IgG and IgE production in B-cells as well as IL8, IL10 and TNF secretion. Inhibits proliferation and induces apoptosis in myeloid leukemia cell lines as well as prevents nuclear translocation of NF-kappa-B p65 subunit/RELA and phosphorylation of I-kappa-B alpha/CHUK in these cells. Inhibits the differentiation of peripheral blood precursors towards dendritic cells. This chain is Leukocyte-associated immunoglobulin-like receptor 1 (Lair1), found in Rattus norvegicus (Rat).